The primary structure comprises 956 residues: RNA-silencing factor ers1 (956 aa).

It localises to the cytoplasm. Its subcellular location is the cytoskeleton. The protein localises to the microtubule organizing center. The protein resides in the spindle pole body. Its function is as follows. Involved in RNAi-dependent heterochromatin formation and centromeric silencing. Required for the conversion of centromeric pre-small interfering RNA transcripts into small interfering RNAs, histone H3 'Lys9' methylation, and the recruitment of the RITS complex to centromeric sequences. In Schizosaccharomyces pombe (strain 972 / ATCC 24843) (Fission yeast), this protein is RNA-silencing factor ers1 (ers1).